The primary structure comprises 292 residues: Homoserine kinase (292 aa).

84 to 94 (PLARGMGSSSA) serves as a coordination point for ATP.

This sequence belongs to the GHMP kinase family. Homoserine kinase subfamily.

It localises to the cytoplasm. The catalysed reaction is L-homoserine + ATP = O-phospho-L-homoserine + ADP + H(+). It functions in the pathway amino-acid biosynthesis; L-threonine biosynthesis; L-threonine from L-aspartate: step 4/5. Its function is as follows. Catalyzes the ATP-dependent phosphorylation of L-homoserine to L-homoserine phosphate. The polypeptide is Homoserine kinase (Thermus thermophilus (strain ATCC 27634 / DSM 579 / HB8)).